The following is a 475-amino-acid chain: BTB/POZ domain-containing protein 10 (475 aa).

Positions 1–144 are disordered; that stretch reads MAGRPHPYDS…SQSSSDGSCK (144 aa). The segment covering 22-31 has biased composition (basic residues); it reads LHSRPRKLYK. Positions 57 to 80 are enriched in basic and acidic residues; that stretch reads GHERSRDRRRSSDRSRDSSHERAE. Over residues 81–94 the composition is skewed to polar residues; the sequence is SQLTPCIRNVTSPT. Residues 97 to 107 are compositionally biased toward basic and acidic residues; sequence HHIEREKDHSS. Residues 108-144 show a composition bias toward low complexity; it reads SRPSSPRPQRASPNGSMSSAGNSSRNSSQSSSDGSCK. The tract at residues 146–475 is interaction with AKT family members; it reads SGEMVFVYEN…LDPDAQNPML (330 aa). The BTB domain maps to 167–241; that stretch reads ERVTLIVDNT…YKTGIIRCPD (75 aa). The tract at residues 451 to 475 is disordered; it reads ELDILPSHPASGNNDLDPDAQNPML.

In terms of assembly, interacts (via C-terminal 330-amino-acid region) with AKT1; AKT2 and AKT3. Interacts with PPP2CA and PPP1CA. As to expression, ubiquitously expressed (at protein level).

It localises to the nucleus. It is found in the cytoplasm. Plays a major role as an activator of AKT family members by inhibiting PPP2CA-mediated dephosphorylation, thereby keeping AKTs activated. Plays a role in preventing motor neuronal death and in accelerating the growth of pancreatic beta cells. The chain is BTB/POZ domain-containing protein 10 (Btbd10) from Mus musculus (Mouse).